Reading from the N-terminus, the 593-residue chain is RNA-binding protein 47 (593 aa).

The segment covering 1-20 has biased composition (low complexity); the sequence is MTAEDSTAAMSSDSAAGSSA. The interval 1–25 is disordered; sequence MTAEDSTAAMSSDSAAGSSAKVPEG. RRM domains lie at 71 to 149, 151 to 233, and 246 to 318; these read CEVF…CSVD, CRLF…WAEP, and KILY…LAKP. Arg332 carries the omega-N-methylarginine modification. An asymmetric dimethylarginine; alternate mark is found at Arg394 and Arg405. 2 positions are modified to omega-N-methylarginine; alternate: Arg394 and Arg405.

This sequence belongs to the RRM RBM47 family. As to quaternary structure, homodimer. Interacts with A1CF. Interacts with APOBEC1; form an mRNA editing complex. Interacts with RBPMS.

It localises to the nucleus. The protein localises to the cytoplasm. Functionally, single-stranded RNA-binding protein that functions in a variety of RNA processes, including alternative splicing, RNA stabilization, and RNA editing. Functions as an enzyme-substrate adapter for the cytidine deaminase APOBEC1. With APOBEC1 forms an mRNA editing complex involved into cytidine to uridine editing of a variety of mRNA molecules. Through the binding of their 3'UTR, also stabilizes a variety of mRNAs and regulates the expression of genes such as the interferon alpha/beta receptor and interleukin-10. Also involved in the alternative splicing of several genes including TJP1. Binds the pre-mRNA (U)GCAUG consensus sequences in downstream intronic regions of alternative exons, regulating their exclusion and inclusion into mRNAs. Independently of its RNA-binding activity, could negatively regulate MAVS by promoting its lysosomal degradation. The chain is RNA-binding protein 47 from Homo sapiens (Human).